The following is a 449-amino-acid chain: MSARKYFGTDGIRGRVGQGVISADFVLRLGNALGRVLTQGRSKRPLVLIGKDTRISGYMFEAALEAGLVAAGADVQLIGPMPTPAIAFLTSTLRADAGVVISASHNPHYDNGIKFFSAEGEKLDDATEAAIEAALDEPFHTVESERLGKAIRTRDAIGRYIEFCKASVARGFTLHGLKMVLDCAHGATYHIAPMLFRELGAEVVVIGAAPDGLNINAGVGSTHIDNLAAKVRECGAHLGIAFDGDGDRVLMADDQGNPVDGDDLLYVLARSWQASGRLTGTVVGTLMTNYGLEQALAALHIPFQRAKVGDRYVHQALVEGGGTLGGETSGHLLCLDRASTGDGIVSALQVLEALGRDGQSLREALASLSKVPQKTVNVRLDGGTAKAIVEAVNVQQALQQAQAAVQGRGRAFLRPSGTEPVVRVTVEADDAGLMQDTLDRLSGAVRDAA.

The Phosphoserine intermediate role is filled by serine 104. Residues serine 104, aspartate 243, aspartate 245, and aspartate 247 each contribute to the Mg(2+) site. Serine 104 carries the phosphoserine modification.

Belongs to the phosphohexose mutase family. Mg(2+) serves as cofactor. In terms of processing, activated by phosphorylation.

The catalysed reaction is alpha-D-glucosamine 1-phosphate = D-glucosamine 6-phosphate. Catalyzes the conversion of glucosamine-6-phosphate to glucosamine-1-phosphate. This is Phosphoglucosamine mutase from Xanthomonas euvesicatoria pv. vesicatoria (strain 85-10) (Xanthomonas campestris pv. vesicatoria).